A 384-amino-acid chain; its full sequence is Probable 2-heptyl-3-hydroxy-4(1H)-quinolone synthase AqdB2 (384 aa).

It belongs to the 3-hydroxybenzoate 6-hydroxylase family.

The enzyme catalyses 2-heptyl-4(1H)-quinolone + NADH + O2 + H(+) = 2-heptyl-3-hydroxy-4(1H)-quinolone + NAD(+) + H2O. Functionally, involved in the degradation of the Pseudomonas aeruginosa quorum sensing signal molecule HHQ (2-heptyl-4-quinolone) to anthranilic acid. Probably catalyzes the hydroxylation of HHQ to PQS (2-heptyl-3-hydroxy-4-quinolone). The polypeptide is Probable 2-heptyl-3-hydroxy-4(1H)-quinolone synthase AqdB2 (Rhodococcus erythropolis (Arthrobacter picolinophilus)).